Here is a 213-residue protein sequence, read N- to C-terminus: Deoxyribose-phosphate aldolase (213 aa).

Asp-89 functions as the Proton donor/acceptor in the catalytic mechanism. The active-site Schiff-base intermediate with acetaldehyde is the Lys-151. The Proton donor/acceptor role is filled by Lys-180.

The protein belongs to the DeoC/FbaB aldolase family. DeoC type 1 subfamily.

The protein resides in the cytoplasm. It carries out the reaction 2-deoxy-D-ribose 5-phosphate = D-glyceraldehyde 3-phosphate + acetaldehyde. The protein operates within carbohydrate degradation; 2-deoxy-D-ribose 1-phosphate degradation; D-glyceraldehyde 3-phosphate and acetaldehyde from 2-deoxy-alpha-D-ribose 1-phosphate: step 2/2. Its function is as follows. Catalyzes a reversible aldol reaction between acetaldehyde and D-glyceraldehyde 3-phosphate to generate 2-deoxy-D-ribose 5-phosphate. This is Deoxyribose-phosphate aldolase from Finegoldia magna (strain ATCC 29328 / DSM 20472 / WAL 2508) (Peptostreptococcus magnus).